Reading from the N-terminus, the 207-residue chain is Dephospho-CoA kinase (207 aa).

A compositionally biased stretch (polar residues) spans 1–11; the sequence is MTRSPAPSSPT. Residues 1–21 form a disordered region; it reads MTRSPAPSSPTHPRRLGLTGS. A DPCK domain is found at 15–207; that stretch reads RLGLTGSIGA…DAALRQLEIT (193 aa). An ATP-binding site is contributed by 23-28; sequence GAGKST.

The protein belongs to the CoaE family.

It is found in the cytoplasm. It catalyses the reaction 3'-dephospho-CoA + ATP = ADP + CoA + H(+). The protein operates within cofactor biosynthesis; coenzyme A biosynthesis; CoA from (R)-pantothenate: step 5/5. Its function is as follows. Catalyzes the phosphorylation of the 3'-hydroxyl group of dephosphocoenzyme A to form coenzyme A. This is Dephospho-CoA kinase from Deinococcus radiodurans (strain ATCC 13939 / DSM 20539 / JCM 16871 / CCUG 27074 / LMG 4051 / NBRC 15346 / NCIMB 9279 / VKM B-1422 / R1).